A 397-amino-acid polypeptide reads, in one-letter code: Phosphoglycerate kinase (397 aa).

Residues 21–23 (DFN), R37, 60–63 (HLGR), R120, and R153 contribute to the substrate site. ATP contacts are provided by residues K206, G296, E327, and 353-356 (GGDS).

It belongs to the phosphoglycerate kinase family. As to quaternary structure, monomer.

It localises to the cytoplasm. It catalyses the reaction (2R)-3-phosphoglycerate + ATP = (2R)-3-phospho-glyceroyl phosphate + ADP. The protein operates within carbohydrate degradation; glycolysis; pyruvate from D-glyceraldehyde 3-phosphate: step 2/5. The sequence is that of Phosphoglycerate kinase from Rhodopirellula baltica (strain DSM 10527 / NCIMB 13988 / SH1).